The following is a 603-amino-acid chain: DNA mismatch repair protein MutL (603 aa).

The protein belongs to the DNA mismatch repair MutL/HexB family.

This protein is involved in the repair of mismatches in DNA. It is required for dam-dependent methyl-directed DNA mismatch repair. May act as a 'molecular matchmaker', a protein that promotes the formation of a stable complex between two or more DNA-binding proteins in an ATP-dependent manner without itself being part of a final effector complex. The polypeptide is DNA mismatch repair protein MutL (Nitrobacter winogradskyi (strain ATCC 25391 / DSM 10237 / CIP 104748 / NCIMB 11846 / Nb-255)).